A 352-amino-acid chain; its full sequence is Thrombopoietin (352 aa).

The N-terminal stretch at 1-23 (MELTELLLVVMLLLTARLDPCLP) is a signal peptide. Cystine bridges form between Cys-28–Cys-172 and Cys-50–Cys-106. 5 N-linked (GlcNAc...) asparagine glycosylation sites follow: Asn-185, Asn-197, Asn-206, Asn-234, and Asn-255. The segment covering 233–245 (LNQTSRSLNQTPG) has biased composition (polar residues). 2 disordered regions span residues 233-259 (LNQT…GTHG) and 292-352 (YSPS…SQEE). Positions 311–327 (PTSPTPQNPLQPPPPDP) are enriched in pro residues. 2 N-linked (GlcNAc...) asparagine glycosylation sites follow: Asn-332 and Asn-347.

Belongs to the EPO/TPO family.

It localises to the secreted. Its function is as follows. Lineage-specific cytokine affecting the proliferation and maturation of megakaryocytes from their committed progenitor cells. It acts at a late stage of megakaryocyte development. It may be the major physiological regulator of circulating platelets. The polypeptide is Thrombopoietin (THPO) (Canis lupus familiaris (Dog)).